The primary structure comprises 3672 residues: Laminin-like protein epi-1 (3672 aa).

Positions 1–27 (MSPYDSSPWATKALFLIVTLLAQFTYS) are cleaved as a signal peptide. The Laminin N-terminal domain occupies 28–297 (QVLTPSQITI…AIKEIMIGGR (270 aa)). 3 N-linked (GlcNAc...) asparagine glycosylation sites follow: N121, N140, and N249. 43 cysteine pairs are disulfide-bonded: C298–C307, C300–C320, C322–C331, C334–C354, C357–C366, C359–C391, C394–C403, C406–C424, C427–C438, C429–C445, C447–C456, C459–C469, C472–C484, C474–C491, C493–C502, C505–C516, C519–C531, C521–C538, C540–C549, C552–C561, C564–C576, C566–C583, C585–C594, C597–C607, C610–C622, C612–C629, C631–C640, C643–C653, C656–C668, C658–C674, C676–C685, C688–C698, C701–C715, C703–C724, C726–C735, C738–C753, C756–C770, C758–C777, C779–C788, C791–C806, C809–C821, C811–C828, and C830–C839. Laminin EGF-like domains follow at residues 298 to 356 (CVCN…TCEA), 357 to 426 (CNCF…PCKV), 427 to 471 (CDCD…KCKP), 472 to 518 (CECN…GCVE), 519 to 563 (CVCD…DCKF), 564 to 609 (CNCD…NCKA), 610 to 655 (CACD…DCRG), 656 to 700 (CECL…ICEE), 701 to 755 (CNCN…GCRS), and 756 to 808 (CDCN…GCES). The N-linked (GlcNAc...) asparagine glycan is linked to N351. An N-linked (GlcNAc...) asparagine glycan is attached at N477. N-linked (GlcNAc...) asparagine glycans are attached at residues N511 and N530. N634 is a glycosylation site (N-linked (GlcNAc...) asparagine). N761 carries an N-linked (GlcNAc...) asparagine glycan. Residues 809–839 (CHCDIGGALRAECDITSGQCKCRPRVTGLRC) enclose the Laminin EGF-like 11; truncated domain. N-linked (GlcNAc...) asparagine glycosylation is found at N1014 and N1341. Cystine bridges form between C1415–C1427, C1417–C1434, C1436–C1445, C1448–C1458, C1461–C1469, C1463–C1476, C1478–C1487, C1490–C1503, C1506–C1520, C1508–C1527, C1529–C1538, C1541–C1551, C1554–C1566, C1556–C1573, C1575–C1584, and C1587–C1602. Laminin EGF-like domains follow at residues 1415-1460 (CDCV…ECIK), 1461-1505 (CQCN…GCQK), 1506-1553 (CGCH…HCYG), and 1554-1604 (CSCN…GCVN). The Laminin EGF-like 16; first part domain maps to 1605-1614 (CFCFGVTDSC). Positions 1615-1796 (RSSMYPVTIM…SVIKASSVEQ (182 aa)) constitute a Laminin IV type A domain. N1705 and N1756 each carry an N-linked (GlcNAc...) asparagine glycan. Residues 1797–1829 (CQCPAPYTGPSCQLCASGYHRVQSGSFLGACVP) form the Laminin EGF-like 16; second part domain. 24 disulfides stabilise this stretch: C1830/C1839, C1832/C1846, C1849/C1858, C1861/C1877, C1880/C1894, C1882/C1905, C1907/C1916, C1919/C1934, C1937/C1951, C1939/C1958, C1961/C1970, C1973/C1987, C1990/C2000, C1992/C2007, C2009/C2018, C2021/C2031, C2037/C2048, C2039/C2055, C2057/C2066, C2069/C2081, C2084/C2096, C2086/C2103, C2105/C2114, and C2117/C2129. 6 consecutive Laminin EGF-like domains span residues 1830–1879 (CECN…DCMA), 1880–1936 (CACP…SCSP), 1937–1989 (CQCN…NCSS), 1990–2036 (CECS…GCQG), 2037–2083 (CHCG…GCDK), and 2084–2131 (CDCE…GCRR). Residue N1868 is glycosylated (N-linked (GlcNAc...) asparagine). N1944 is a glycosylation site (N-linked (GlcNAc...) asparagine). N-linked (GlcNAc...) asparagine glycosylation is present at N1986. Residue N2002 is glycosylated (N-linked (GlcNAc...) asparagine). N2159, N2207, N2231, N2235, N2401, N2421, N2487, and N2821 each carry an N-linked (GlcNAc...) asparagine glycan. Laminin G-like domains follow at residues 2693–2884 (GAHF…VNGA), 2896–3066 (ELVV…RSGC), and 3072–3235 (RTVS…LNGC). An intrachain disulfide couples C3040 to C3066. The N-linked (GlcNAc...) asparagine glycan is linked to N3087. Residues C3209 and C3235 are joined by a disulfide bond. The segment at 3236–3294 (SLSDDENISTTTTAAPKPTDDSDVAVLPIDEEEESTTTTTTTTTEEPTEEPAEARPDGH) is disordered. The N-linked (GlcNAc...) asparagine glycan is linked to N3242. A compositionally biased stretch (low complexity) spans 3271–3280 (TTTTTTTTTE). 2 consecutive Laminin G-like domains span residues 3310-3482 (GFNF…TEQC) and 3488-3669 (PGMY…RNAC). C3460 and C3482 are joined by a disulfide. N3541 carries N-linked (GlcNAc...) asparagine glycosylation. A disulfide bond links C3633 and C3669.

Laminin is a complex glycoprotein, consisting of three different polypeptide chains (alpha, beta, gamma), which are bound to each other by disulfide bonds into a cross-shaped molecule comprising one long and three short arms with globules at each end.

It is found in the secreted. The protein localises to the extracellular space. The protein resides in the extracellular matrix. Its subcellular location is the basement membrane. In terms of biological role, binding to cells via a high affinity receptor, laminin is thought to mediate the attachment, migration and organization of cells into tissues during embryonic development by interacting with other extracellular matrix components. Required to assemble a stable basement membrane and for organizing receptor complexes and cytoskeletal components to the proper cell surfaces. During embryogenesis, does not require the presence of collagen type IV in order to associate with cell surfaces, prior to assembly of the prototypical basement membrane. During the formation of neuromuscular junctions at the larval stage, negatively regulates membrane protrusion from body wall muscles, probably downstream of the integrin complex formed by pat-2 and pat-3. Probably plays a distinct role from the related laminin subunit alpha lam-3. The protein is Laminin-like protein epi-1 (epi-1) of Caenorhabditis elegans.